Consider the following 343-residue polypeptide: MKNLLDLSYEELVTEITNLGLERYRADQILDWVFDKKVNNFDEMTNLSKKHRALLKEHFSISFLKLLDKKVSRIDGTTKFLWELEDGNTIESVMLFHPDRITACISTQVGCPVKCIFCATGMSGFVRNLTTGEIVAQILSMEKEEKKKIGNVVYMGMGEPLLNYENTIKSIRILNHKKMGNIGIRRITISTVGIPDRIIQLAEEGLDVKLALSLHAPTNFKRDQLVPLNKKYSIEEILNAVKIYQRKTGNRVTIEYVLIRGINDEISDAKKLAEILRNMKVFVNLIPVNPTVEGLRRPSRERLLTFKRILLENGIEAEIRREKGTDIEAACGQLRLKRIKSRS.

The active-site Proton acceptor is the glutamate 91. Positions 97–326 (HPDRITACIS…AEIRREKGTD (230 aa)) constitute a Radical SAM core domain. The cysteines at positions 104 and 331 are disulfide-linked. Positions 111, 115, and 118 each coordinate [4Fe-4S] cluster. S-adenosyl-L-methionine is bound by residues 158–159 (GE), serine 190, 213–215 (SLH), and asparagine 289. Cysteine 331 functions as the S-methylcysteine intermediate in the catalytic mechanism.

It belongs to the radical SAM superfamily. RlmN family. It depends on [4Fe-4S] cluster as a cofactor.

It localises to the cytoplasm. The enzyme catalyses adenosine(2503) in 23S rRNA + 2 reduced [2Fe-2S]-[ferredoxin] + 2 S-adenosyl-L-methionine = 2-methyladenosine(2503) in 23S rRNA + 5'-deoxyadenosine + L-methionine + 2 oxidized [2Fe-2S]-[ferredoxin] + S-adenosyl-L-homocysteine. It catalyses the reaction adenosine(37) in tRNA + 2 reduced [2Fe-2S]-[ferredoxin] + 2 S-adenosyl-L-methionine = 2-methyladenosine(37) in tRNA + 5'-deoxyadenosine + L-methionine + 2 oxidized [2Fe-2S]-[ferredoxin] + S-adenosyl-L-homocysteine. Functionally, specifically methylates position 2 of adenine 2503 in 23S rRNA and position 2 of adenine 37 in tRNAs. In Thermotoga maritima (strain ATCC 43589 / DSM 3109 / JCM 10099 / NBRC 100826 / MSB8), this protein is Probable dual-specificity RNA methyltransferase RlmN.